The sequence spans 409 residues: TM2 domain-containing protein ZK858.5 (409 aa).

The TM2 domain maps to 8–55 (VKPWIVRIILIVGGLFGAHRLYLKQVPEAFVFFSTLGVLLIGWLYDSF). A run of 6 helical transmembrane segments spans residues 10-30 (PWIV…RLYL), 37-57 (FVFF…SFMF), 104-124 (VLYG…TFGW), 127-147 (INLI…IYII), 168-190 (MFIM…AIVS), and 209-229 (HFLF…LGCS).

It belongs to the TM2 family.

The protein resides in the membrane. The sequence is that of TM2 domain-containing protein ZK858.5 from Caenorhabditis elegans.